Here is a 496-residue protein sequence, read N- to C-terminus: UDP-N-acetylmuramate--L-alanine ligase (496 aa).

122–128 provides a ligand contact to ATP; it reads GTHGKTT.

This sequence belongs to the MurCDEF family.

The protein resides in the cytoplasm. The catalysed reaction is UDP-N-acetyl-alpha-D-muramate + L-alanine + ATP = UDP-N-acetyl-alpha-D-muramoyl-L-alanine + ADP + phosphate + H(+). Its pathway is cell wall biogenesis; peptidoglycan biosynthesis. In terms of biological role, cell wall formation. In Mycobacterium avium (strain 104), this protein is UDP-N-acetylmuramate--L-alanine ligase.